Consider the following 380-residue polypeptide: Cytochrome b (380 aa).

Helical transmembrane passes span 33–53, 77–98, 113–133, and 178–198; these read FGSL…FLAM, WLIR…FLHV, WNMG…GYVL, and FFAF…VHLL. His-83 and His-97 together coordinate heme. The heme site is built by His-182 and His-196. His-201 provides a ligand contact to a ubiquinone. 4 helical membrane passes run 226-246, 288-308, 320-340, and 347-367; these read VKDF…TLFF, LGGV…PLLH, ITQT…WIGG, and FIII…IFMP.

Belongs to the cytochrome b family. The cytochrome bc1 complex contains 11 subunits: 3 respiratory subunits (MT-CYB, CYC1 and UQCRFS1), 2 core proteins (UQCRC1 and UQCRC2) and 6 low-molecular weight proteins (UQCRH/QCR6, UQCRB/QCR7, UQCRQ/QCR8, UQCR10/QCR9, UQCR11/QCR10 and a cleavage product of UQCRFS1). This cytochrome bc1 complex then forms a dimer. The cofactor is heme.

The protein resides in the mitochondrion inner membrane. Functionally, component of the ubiquinol-cytochrome c reductase complex (complex III or cytochrome b-c1 complex) that is part of the mitochondrial respiratory chain. The b-c1 complex mediates electron transfer from ubiquinol to cytochrome c. Contributes to the generation of a proton gradient across the mitochondrial membrane that is then used for ATP synthesis. The polypeptide is Cytochrome b (MT-CYB) (Microtus arvalis (Common vole)).